The primary structure comprises 395 residues: Oxalate oxidoreductase subunit alpha (395 aa).

As to quaternary structure, dimer of heterotrimer of one alpha, one beta and one delta subunit.

It catalyses the reaction oxidized 2[4Fe-4S]-[ferredoxin] + oxalate = reduced 2[4Fe-4S]-[ferredoxin] + 2 CO2. Functionally, catalyzes the anaerobic oxidation of oxalate using a broad range of electron acceptors, including ferredoxin and the nickel-dependent carbon monoxide dehydrogenase. Does not require coenzyme A as cosubstrate. Enables anaerobic growth on oxalate which is used as energy source by the bacteria. This Moorella thermoacetica (strain ATCC 39073 / JCM 9320) protein is Oxalate oxidoreductase subunit alpha.